Here is a 257-residue protein sequence, read N- to C-terminus: MLIIDIGNTNIKFGICINNQIIQTLRISSQPRRTADEYFFFLNTMRNQLNTNNFTITHIIISSVVPSITKPMIELSTHYFNITPTIINNQHADICNIKIDLNDKLLGSDRLASIIGAVTLYPNKNLLVISMGTATVFNLISKERSIYGQVITPGAHIMAQSMRQHTALLPEISQIKVNKVVHNTLFYAIEAGVYWGYIAMVEGIVKQILHEENKDLHIVATGGNSILFIDHKNFIKNIDPDLTMKGMIYLHNMLFNK.

5-12 (DIGNTNIK) is an ATP binding site. A substrate-binding site is contributed by 107-110 (GSDR). The active-site Proton acceptor is the D109. An ATP-binding site is contributed by T133.

It belongs to the type III pantothenate kinase family. Homodimer. NH4(+) is required as a cofactor. K(+) serves as cofactor.

Its subcellular location is the cytoplasm. It carries out the reaction (R)-pantothenate + ATP = (R)-4'-phosphopantothenate + ADP + H(+). It functions in the pathway cofactor biosynthesis; coenzyme A biosynthesis; CoA from (R)-pantothenate: step 1/5. Functionally, catalyzes the phosphorylation of pantothenate (Pan), the first step in CoA biosynthesis. In Ehrlichia ruminantium (strain Gardel), this protein is Type III pantothenate kinase.